The primary structure comprises 270 residues: Undecaprenyl-diphosphatase (270 aa).

The next 7 membrane-spanning stretches (helical) occupy residues 1 to 21 (MTWW…FIPV), 92 to 112 (FRLG…YVLF), 119 to 139 (AFGS…LLLL), 150 to 170 (LSGV…VPGI), 193 to 213 (FSFL…GLEL), 223 to 243 (LSLG…IYVV), and 250 to 270 (GNLQ…LWLL).

It belongs to the UppP family.

Its subcellular location is the cell inner membrane. It catalyses the reaction di-trans,octa-cis-undecaprenyl diphosphate + H2O = di-trans,octa-cis-undecaprenyl phosphate + phosphate + H(+). Functionally, catalyzes the dephosphorylation of undecaprenyl diphosphate (UPP). Confers resistance to bacitracin. In Salinibacter ruber (strain DSM 13855 / M31), this protein is Undecaprenyl-diphosphatase.